Reading from the N-terminus, the 412-residue chain is FAD-dependent monooxygenase nscC (412 aa).

Residues 1–21 form the signal peptide; the sequence is MAKPQATVLIIGAGISGLTTS. FAD contacts are provided by Glu35 and Ala46. An N-linked (GlcNAc...) asparagine glycan is attached at Asn92. An FAD-binding site is contributed by Arg119. N-linked (GlcNAc...) asparagine glycans are attached at residues Asn170 and Asn231. Positions 326 and 339 each coordinate FAD.

It belongs to the paxM FAD-dependent monooxygenase family. It depends on FAD as a cofactor.

It functions in the pathway secondary metabolite biosynthesis. FAD-dependent monooxygenase; part of the gene cluster that mediates the biosynthesis of neosartoricin B, a prenylated anthracenone that probably exhibits T-cell antiproliferative activity, suggestive of a physiological role as an immunosuppressive agent. The non-reducing polyketide synthase nscA probably synthesizes and cyclizes the decaketide backbone. The hydrolase nscB then mediates the product release through hydrolysis followed by spontaneous decarboxylation. The prenyltransferase nscD catalyzes the addition of the dimethylallyl group to the aromatic C5. The FAD-dependent monooxygenase nscC is then responsible for the stereospecific hydroxylation at C2. Neosartoricin B can be converted into two additional compounds neosartoricins C and D. Neosartoricin C is a spirocyclic compound that is cyclized through the attack of C3 hydroxyl on C14, followed by dehydration. On the other hand, neosartoricin D is a further cyclized compound in which attack of C2 on C14 in neosartoricin C results in the formation of the acetal-containing dioxabicyclo-octanone ring. Both of these compounds are novel and possibly represent related metabolites of the gene cluster. This is FAD-dependent monooxygenase nscC from Arthroderma otae (strain ATCC MYA-4605 / CBS 113480) (Microsporum canis).